Consider the following 189-residue polypeptide: GTPase HRas (189 aa).

GTP is bound at residue 10–17 (GAKGVGKS). Positions 32–40 (YDPTIEDSY) match the Effector region motif. Residues 57–61 (DTAGQ) and 116–119 (NKCD) contribute to the GTP site. S-palmitoyl cysteine; by host attachment occurs at residues Cys-181 and Cys-184. Cys-186 carries the cysteine methyl ester; by host modification. The S-farnesyl cysteine; by host moiety is linked to residue Cys-186. A propeptide spans 187-189 (VLS) (removed in mature form).

The protein belongs to the small GTPase superfamily. Ras family.

It localises to the host cell membrane. It catalyses the reaction GTP + H2O = GDP + phosphate + H(+). With respect to regulation, alternates between an inactive form bound to GDP and an active form bound to GTP. Activated by a guanine nucleotide-exchange factor (GEF) and inactivated by a GTPase-activating protein (GAP). The polypeptide is GTPase HRas (H-RAS) (Moloney murine sarcoma virus (MoMSV)).